Consider the following 288-residue polypeptide: Lysosomal thioesterase PPT2-B (288 aa).

Positions 1 to 20 (MRGYLLLLPLLLCLVDNSVS) are cleaved as a signal peptide. An intrachain disulfide couples Cys95 to Cys103. The active-site Nucleophile is Ser97. Residue Asn143 is glycosylated (N-linked (GlcNAc...) asparagine). Residues Cys151 and Cys162 are joined by a disulfide bond. Asn192 carries N-linked (GlcNAc...) asparagine glycosylation. Residues Asp214 and His269 contribute to the active site. An N-linked (GlcNAc...) asparagine glycan is attached at Asn275.

The protein belongs to the palmitoyl-protein thioesterase family.

It is found in the lysosome. The enzyme catalyses hexadecanoyl-CoA + H2O = hexadecanoate + CoA + H(+). It catalyses the reaction S-hexadecanoyl-N-acetylcysteamine + H2O = N-acetylcysteamine + hexadecanoate + H(+). Catalyzes the cleavage of thioester bonds from S-palmitoyl-CoA or S-palmitoyl-N-acetylcysteamine (unbranched structures) but does not have activity against palmitoylcysteine or palmitoylated proteins, branched structures or bulky head groups. Conversely, hydrolyzes both long and short chain fatty acyl-CoA substrate. The protein is Lysosomal thioesterase PPT2-B (ppt2-b) of Xenopus laevis (African clawed frog).